We begin with the raw amino-acid sequence, 102 residues long: Nucleoid-associated protein BCc_301 (102 aa).

This sequence belongs to the YbaB/EbfC family. As to quaternary structure, homodimer.

It localises to the cytoplasm. The protein resides in the nucleoid. Functionally, binds to DNA and alters its conformation. May be involved in regulation of gene expression, nucleoid organization and DNA protection. The protein is Nucleoid-associated protein BCc_301 of Buchnera aphidicola subsp. Cinara cedri (strain Cc).